The following is a 44-amino-acid chain: F420-non-reducing hydrogenase vhu subunit U (44 aa).

2 residues coordinate Ni(2+): Sec20 and Cys23. A non-standard amino acid (selenocysteine) is located at residue Sec20. The propeptide at Met27–Glu44 is removed in mature form.

Belongs to the [NiFe]/[NiFeSe] hydrogenase large subunit family. The F420-non-reducing hydrogenase vhu is composed of four subunits; VhuA, VhuD, VhuG and VhuU. Requires Ni(2+) as cofactor.

The protein is F420-non-reducing hydrogenase vhu subunit U (vhuU) of Methanococcus voltae.